The sequence spans 108 residues: Putative membrane protein insertion efficiency factor (108 aa).

This sequence belongs to the UPF0161 family.

The protein resides in the cell inner membrane. Could be involved in insertion of integral membrane proteins into the membrane. This Chelativorans sp. (strain BNC1) protein is Putative membrane protein insertion efficiency factor.